The following is a 271-amino-acid chain: Tryptophan synthase alpha chain (271 aa).

Catalysis depends on proton acceptor residues E53 and D64.

This sequence belongs to the TrpA family. In terms of assembly, tetramer of two alpha and two beta chains.

The enzyme catalyses (1S,2R)-1-C-(indol-3-yl)glycerol 3-phosphate + L-serine = D-glyceraldehyde 3-phosphate + L-tryptophan + H2O. The protein operates within amino-acid biosynthesis; L-tryptophan biosynthesis; L-tryptophan from chorismate: step 5/5. In terms of biological role, the alpha subunit is responsible for the aldol cleavage of indoleglycerol phosphate to indole and glyceraldehyde 3-phosphate. This Streptomyces coelicolor (strain ATCC BAA-471 / A3(2) / M145) protein is Tryptophan synthase alpha chain.